The chain runs to 161 residues: Ureidoglycolate lyase (161 aa).

This sequence belongs to the ureidoglycolate lyase family. In terms of assembly, homodimer. It depends on Ni(2+) as a cofactor.

The catalysed reaction is (S)-ureidoglycolate = urea + glyoxylate. Its pathway is nitrogen metabolism; (S)-allantoin degradation. Its function is as follows. Catalyzes the catabolism of the allantoin degradation intermediate (S)-ureidoglycolate, generating urea and glyoxylate. Involved in the utilization of allantoin as nitrogen source. The protein is Ureidoglycolate lyase of Rhodobacter capsulatus (strain ATCC BAA-309 / NBRC 16581 / SB1003).